Reading from the N-terminus, the 217-residue chain is Flagellar L-ring protein 1 (217 aa).

The first 16 residues, 1–16 (MTLARLAPLAALLLAA), serve as a signal peptide directing secretion. A lipid anchor (N-palmitoyl cysteine) is attached at Cys-17. The S-diacylglycerol cysteine moiety is linked to residue Cys-17.

Belongs to the FlgH family. As to quaternary structure, the basal body constitutes a major portion of the flagellar organelle and consists of four rings (L,P,S, and M) mounted on a central rod.

It is found in the cell outer membrane. It localises to the bacterial flagellum basal body. In terms of biological role, assembles around the rod to form the L-ring and probably protects the motor/basal body from shearing forces during rotation. The sequence is that of Flagellar L-ring protein 1 from Chromobacterium violaceum (strain ATCC 12472 / DSM 30191 / JCM 1249 / CCUG 213 / NBRC 12614 / NCIMB 9131 / NCTC 9757 / MK).